Consider the following 84-residue polypeptide: Putative membrane protein insertion efficiency factor (84 aa).

It belongs to the UPF0161 family.

The protein localises to the cell inner membrane. Its function is as follows. Could be involved in insertion of integral membrane proteins into the membrane. The polypeptide is Putative membrane protein insertion efficiency factor (Shewanella halifaxensis (strain HAW-EB4)).